The chain runs to 503 residues: Probable cytosol aminopeptidase (503 aa).

The Mn(2+) site is built by lysine 270 and aspartate 275. Lysine 282 is an active-site residue. Residues aspartate 293, aspartate 352, and glutamate 354 each coordinate Mn(2+). Arginine 356 is an active-site residue.

This sequence belongs to the peptidase M17 family. Mn(2+) serves as cofactor.

Its subcellular location is the cytoplasm. It catalyses the reaction Release of an N-terminal amino acid, Xaa-|-Yaa-, in which Xaa is preferably Leu, but may be other amino acids including Pro although not Arg or Lys, and Yaa may be Pro. Amino acid amides and methyl esters are also readily hydrolyzed, but rates on arylamides are exceedingly low.. The enzyme catalyses Release of an N-terminal amino acid, preferentially leucine, but not glutamic or aspartic acids.. In terms of biological role, presumably involved in the processing and regular turnover of intracellular proteins. Catalyzes the removal of unsubstituted N-terminal amino acids from various peptides. This Yersinia pseudotuberculosis serotype O:1b (strain IP 31758) protein is Probable cytosol aminopeptidase.